Consider the following 161-residue polypeptide: Endoribonuclease YbeY (161 aa).

Positions 121, 125, and 131 each coordinate Zn(2+).

It belongs to the endoribonuclease YbeY family. Zn(2+) is required as a cofactor.

Its subcellular location is the cytoplasm. Functionally, single strand-specific metallo-endoribonuclease involved in late-stage 70S ribosome quality control and in maturation of the 3' terminus of the 16S rRNA. The chain is Endoribonuclease YbeY from Stenotrophomonas maltophilia (strain K279a).